The following is a 661-amino-acid chain: MPLPSRASSTPKISKACVPCRTRKIKCNAAVVGLPCGSCVSRECPDECVLSARKRRTVKGRNAEVPRSRKNIPDTNGSILSPRQQQLPTNVSRQTTDSSHSDPVEESIHASHTGSSLRNDTPHSRDRRPPGQAQADLLYLNILQDTVNDTSAAQTDASDHQSNDEPDDSFNSQIHHWNPPPQLDDVDNEYLAKKKVFELPPPRFMDDIVKAYFDYVHPFAPILNRIDFIQSYRSGSCCIFLLHAVAAAASLYVTHDVLIGCGYPDRSTAQASFFSKAKLFHDFHCQGDPLSMLQGSMILGAIILDHPSDRDFQYWFHNSVRRASKMGVQNACLRDDGSQKLYRRIWWVLHNRDIFHFFINTQNMRLLANAPPIRPLTEADWETEDIEQWSGILSPISQAQKVSLIAQCELAQIFGNVMSVVTSSNPSAEEIHKRILPLDAWRTSLPERMHLMASFAEGEIYHLEALTTSYRFECIMCRLLRRGRWQMSDGGLREWAQQRFRSAIFELDTIVKRVMINNMIQKLPTTFITTITALLALHIESALDAAESSLIRSMARISVQHTMLALDQIRDTPAIKRALPAFEIVLSKNKLYPMSTSDTEQINTMQTMSQDQALSDGHILQPPQTDMTLPQDDQSFLYGDFIGFDFLDRWQMEQLDFTGIY.

Positions 17–48 (CVPCRTRKIKCNAAVVGLPCGSCVSRECPDEC) form a DNA-binding region, zn(2)-C6 fungal-type. 2 disordered regions span residues 57-131 (TVKG…RPPG) and 151-185 (SAAQ…QLDD). Over residues 73–98 (PDTNGSILSPRQQQLPTNVSRQTTDS) the composition is skewed to polar residues. Residues 99-109 (SHSDPVEESIH) are compositionally biased toward basic and acidic residues. Polar residues predominate over residues 110-119 (ASHTGSSLRN). Positions 120–129 (DTPHSRDRRP) are enriched in basic and acidic residues.

It is found in the nucleus. Functionally, transcription factor that is involved in the formation of the two Fusaric acid derivatives, dehydrofusaric acid and fusarinolic acid, serving as a detoxification mechanism. The sequence is that of Fusaric acid cluster transcription factor FUB12 from Gibberella fujikuroi (strain CBS 195.34 / IMI 58289 / NRRL A-6831) (Bakanae and foot rot disease fungus).